The primary structure comprises 60 residues: UPF0434 protein Mfla_2088 (60 aa).

The protein belongs to the UPF0434 family.

This is UPF0434 protein Mfla_2088 from Methylobacillus flagellatus (strain ATCC 51484 / DSM 6875 / VKM B-1610 / KT).